The chain runs to 417 residues: SNF1 protein kinase subunit beta-3 (417 aa).

A compositionally biased stretch (basic and acidic residues) spans 1-12 (MAGDNPENKDAS). Residues 1–37 (MAGDNPENKDASMLDVSDAASNTTINGKHSADSTNEA) are disordered. Phosphoserine is present on residues S12, S21, S44, and S135. Over residues 19–37 (AASNTTINGKHSADSTNEA) the composition is skewed to polar residues. Disordered regions lie at residues 64 to 155 (SSLI…VEGK) and 250 to 269 (GNEPQQHLAEKKANHVDDSK). A compositionally biased stretch (polar residues) spans 118-136 (TGNTLQKMDYQPSQQPDSL). A compositionally biased stretch (low complexity) spans 137 to 149 (QNQGFQQQQEQQQ). Residues 152–342 (VEGKKGRAMM…DQQQNNHQNM (191 aa)) are kinase-interacting sequence (KIS); required for interaction with SNF1. Residues 257 to 269 (LAEKKANHVDDSK) are compositionally biased toward basic and acidic residues. Residues S276 and S279 each carry the phosphoserine modification. The association with SNF1 kinase complex (ASC) domain; required for interaction with SNF4 stretch occupies residues 343-417 (AWLTPPQLPP…VTQILYTPLQ (75 aa)).

The protein belongs to the 5'-AMP-activated protein kinase beta subunit family. Component of the SNF1 kinase complex, a heterotrimeric complex composed of the catalytic alpha subunit SNF1, one of the three related beta subunits SIP1, SIP2 or GAL83, and the regulatory gamma subunit SNF4. The beta subunit serves as a bridge between the catalytic and the regulatory subunit. Interacts (via KIS domain) with SNF1. Interacts (via ASC domain) with SNF4. Interacts with REE1. Phosphorylated by SNF1 in vitro.

Its subcellular location is the cytoplasm. The protein resides in the nucleus. Beta subunit of the SNF1 kinase complex, which is required for transcriptional, metabolic, and developmental adaptations in response to glucose limitation. Has a structural role, mediating heterotrimer formation, and a regulatory role, defining carbon source-regulated subcellular location and substrate specificity of the SNF1 kinase complex. Promotes the relocalization of the SNF1 kinase complex to the nucleus upon shift to nonfermentable carbon sources. This chain is SNF1 protein kinase subunit beta-3 (GAL83), found in Saccharomyces cerevisiae (strain ATCC 204508 / S288c) (Baker's yeast).